We begin with the raw amino-acid sequence, 205 residues long: DNA-directed RNA polymerase RPB5 homolog (205 aa).

The protein belongs to the archaeal RpoH/eukaryotic RPB5 RNA polymerase subunit family. Part of the viral DNA-directed RNA polymerase that consists of 8 polII-like subunits (RPB1, RPB2, RPB3, RPB5, RPB6, RPB7, RPB9, RPB10), a capping enzyme and a termination factor.

It is found in the host cytoplasm. It localises to the virion. Its function is as follows. Component of the DNA-directed RNA polymerase (RNAP) that catalyzes the transcription in the cytoplasm of viral DNA into RNA using the four ribonucleoside triphosphates as substrates. The sequence is that of DNA-directed RNA polymerase RPB5 homolog from African swine fever virus (isolate Pig/Kenya/KEN-50/1950) (ASFV).